Consider the following 620-residue polypeptide: Arginine--tRNA ligase (620 aa).

The 'HIGH' region signature appears at 147 to 157; that stretch reads ANPTGPIHIGG.

The protein belongs to the class-I aminoacyl-tRNA synthetase family. In terms of assembly, monomer.

Its subcellular location is the cytoplasm. It catalyses the reaction tRNA(Arg) + L-arginine + ATP = L-arginyl-tRNA(Arg) + AMP + diphosphate. In Bifidobacterium longum (strain DJO10A), this protein is Arginine--tRNA ligase.